Consider the following 178-residue polypeptide: MADGKAGEEKPEKPQRAGAAGGPEEEAEKPVKTKTVSSSNGGESSSRSAEKRSAEDEAADLPTKPTKMSKFGFAIGSQTARKASAISIRLGASKPKETVPTLAPKTLSVAAAFNEDEDSEPEEMPPEAKMRMKNIGRDTPTSAGPNSFNKGKHGFSDNQKLWERNIKSHLGNVHDQDN.

A compositionally biased stretch (basic and acidic residues) spans 1–15; that stretch reads MADGKAGEEKPEKPQ. Positions 1-82 are disordered; it reads MADGKAGEEK…FAIGSQTARK (82 aa). Ala2 carries the N-acetylalanine modification. Over residues 37-47 the composition is skewed to low complexity; the sequence is SSSNGGESSSR. Ser53 carries the post-translational modification Phosphoserine. Lys64 is modified (N6-acetyllysine). Residues Ser77, Ser87, and Ser119 each carry the phosphoserine modification. Positions 134 to 158 are disordered; that stretch reads NIGRDTPTSAGPNSFNKGKHGFSDN. Thr139 is modified (phosphothreonine). Positions 139-149 are enriched in polar residues; the sequence is TPTSAGPNSFN. Ser147 carries the post-translational modification Phosphoserine. An N6-acetyllysine mark is found at Lys150 and Lys152.

As to quaternary structure, interacts with UHRF2/NIRF. In terms of processing, ubiquitinated; mediated by UHRF2 and leading to its subsequent proteasomal degradation. Post-translationally, N-terminally acetylated in a HYPK-dependent manner by the NatA acetyltransferase complex which is composed of NAA10 and NAA15.

The protein localises to the nucleus. Its function is as follows. May be involved in cell cycle regulation. The chain is PEST proteolytic signal-containing nuclear protein (Pcnp) from Mus musculus (Mouse).